The sequence spans 216 residues: Probable GTP-binding protein EngB (216 aa).

The region spanning 26–200 is the EngB-type G domain; sequence EGIEIAFAGR…RAKLDTWFAP (175 aa). Residues 34–41, 61–65, 79–82, 146–149, and 179–181 contribute to the GTP site; these read GRSNAGKS, GRTQL, DLPG, TKAD, and YSS. Residues Ser-41 and Thr-63 each coordinate Mg(2+).

It belongs to the TRAFAC class TrmE-Era-EngA-EngB-Septin-like GTPase superfamily. EngB GTPase family. The cofactor is Mg(2+).

Functionally, necessary for normal cell division and for the maintenance of normal septation. The chain is Probable GTP-binding protein EngB from Vibrio vulnificus (strain YJ016).